Consider the following 297-residue polypeptide: Translocase of chloroplast 33, chloroplastic (297 aa).

The AIG1-type G domain occupies 34–258 (MNSMTVLVLG…HVDKKMVDGS (225 aa)). Residues 37–53 (MTVLVLGKGGVGKSSTV) traverse the membrane as a helical segment. GTP is bound by residues 46–51 (GVGKSS) and 65–70 (SPFQAE). Residues S50 and Q68 each coordinate Mg(2+). Homodimerization stretches follow at residues 65–68 (SPFQ) and 125–130 (RLDVYR). H160 provides a ligand contact to GTP. A Phosphoserine modification is found at S181. A GTP-binding site is contributed by 208 to 209 (EN).

It belongs to the TRAFAC class TrmE-Era-EngA-EngB-Septin-like GTPase superfamily. AIG1/Toc34/Toc159-like paraseptin GTPase family. TOC34 subfamily. As to quaternary structure, homodimer, heterodimer with TOC34 and TOC159, and monomer. The homodimerization and the dimerization with TOC159 require the binding of GTP on Arg-130, and a hypothetical coGAP factor. The dimeric form has a higher GTPase activity than the monomeric form. Part of the TOC core complex that includes 1 protein for the specific recognition of transit peptides surrounded by a ring composed of four proteins forming translocation channels, and four to five GTP-binding proteins providing energy. This core complex can interact with components of the TIC complex to form a larger import complex. Chloroplastic protein precursor such as prSS (precursor of the RuBisCO small subunit) interacts with these complexes. The TOC complex contains a specific subset of polar lipids such as digalactosyldiacylglyceride (DGDG), phosphatidylcholine (PC) and phosphatidylglycerol (PG). Interacts at least with TOC75-3. Forms large complexes including TOC33, pPORA and OEP161 during pPORA import into plastids at the plastid envelope membrane. Interacts with SP1. Mg(2+) is required as a cofactor. In terms of processing, phosphorylated by a kinase present in the outer envelope of chloroplast. When Ser-181 is phosphorylated, the binding to preprotein, GTP and GDP is inhibited, and thus, GTPase activity is repressed. Mostly expressed in seedlings and flowers, and, to a lower extent, in roots, stems, and leaves.

Its subcellular location is the plastid. The protein resides in the chloroplast outer membrane. GTPase involved in protein precursor import into chloroplasts. Seems to recognize chloroplast-destined precursor proteins and regulate their presentation to the translocation channel through GTP hydrolysis. Binds GTP, GDP, XTP, but not ATP. Probably specialized in the import of nuclear encoded photosynthetic preproteins from the cytoplasm to the chloroplast, especially during early development stages. The chain is Translocase of chloroplast 33, chloroplastic (TOC33) from Arabidopsis thaliana (Mouse-ear cress).